Reading from the N-terminus, the 500-residue chain is Probable malate:quinone oxidoreductase (500 aa).

This sequence belongs to the MQO family. It depends on FAD as a cofactor.

The catalysed reaction is (S)-malate + a quinone = a quinol + oxaloacetate. It functions in the pathway carbohydrate metabolism; tricarboxylic acid cycle; oxaloacetate from (S)-malate (quinone route): step 1/1. The chain is Probable malate:quinone oxidoreductase from Bordetella avium (strain 197N).